The sequence spans 179 residues: UPF0167 protein PA1536 (179 aa).

It belongs to the UPF0167 family.

The polypeptide is UPF0167 protein PA1536 (Pseudomonas aeruginosa (strain ATCC 15692 / DSM 22644 / CIP 104116 / JCM 14847 / LMG 12228 / 1C / PRS 101 / PAO1)).